A 557-amino-acid polypeptide reads, in one-letter code: Isocitrate lyase (557 aa).

Position 53 is a phosphothreonine (threonine 53). 106–108 (SGW) contributes to the substrate binding site. A Mg(2+)-binding site is contributed by aspartate 179. The Proton acceptor role is filled by cysteine 217. Substrate is bound by residues 218 to 219 (GH), arginine 254, 437 to 441 (NLSPS), and threonine 471.

Belongs to the isocitrate lyase/PEP mutase superfamily. Isocitrate lyase family. Homotetramer. Requires Mg(2+) as cofactor. In terms of processing, phosphorylated in response to elevated glucose levels, leading first to reversible inactivation of the enzyme (short-term inactivation), and at a later stage to proteolytic degradation of the protein (long-term inactivation).

The protein localises to the cytoplasm. It localises to the secreted. The protein resides in the extracellular space. Its subcellular location is the extracellular matrix. It is found in the vacuole. It catalyses the reaction D-threo-isocitrate = glyoxylate + succinate. The enzyme catalyses (2S,3R)-3-hydroxybutane-1,2,3-tricarboxylate = pyruvate + succinate. Its pathway is carbohydrate metabolism; glyoxylate cycle; (S)-malate from isocitrate: step 1/2. With respect to regulation, phosphorylated and inactivated after addition of glucose to the cell culture (repressing conditions). In terms of biological role, catalyzes the formation of succinate and glyoxylate from isocitrate, a key step of the glyoxylate cycle, which operates as an anaplerotic route for replenishing the tricarboxylic acid cycle. Required for growth on ethanol or acetate, but dispensable when fermentable carbon sources are available. Also acts on 2-methylisocitrate. The sequence is that of Isocitrate lyase from Saccharomyces cerevisiae (strain ATCC 204508 / S288c) (Baker's yeast).